Consider the following 426-residue polypeptide: Phosphomethylpyrimidine synthase (426 aa).

Substrate-binding positions include Met-94, Tyr-123, His-162, 184-186, 225-228, and Glu-264; these read SRG and NGMR. A Zn(2+)-binding site is contributed by His-268. Position 291 (Tyr-291) interacts with substrate. His-332 serves as a coordination point for Zn(2+). Cys-406, Cys-409, and Cys-413 together coordinate [4Fe-4S] cluster.

This sequence belongs to the ThiC family. [4Fe-4S] cluster serves as cofactor.

It carries out the reaction 5-amino-1-(5-phospho-beta-D-ribosyl)imidazole + S-adenosyl-L-methionine = 4-amino-2-methyl-5-(phosphooxymethyl)pyrimidine + CO + 5'-deoxyadenosine + formate + L-methionine + 3 H(+). It functions in the pathway cofactor biosynthesis; thiamine diphosphate biosynthesis. In terms of biological role, catalyzes the synthesis of the hydroxymethylpyrimidine phosphate (HMP-P) moiety of thiamine from aminoimidazole ribotide (AIR) in a radical S-adenosyl-L-methionine (SAM)-dependent reaction. The polypeptide is Phosphomethylpyrimidine synthase (Methanospirillum hungatei JF-1 (strain ATCC 27890 / DSM 864 / NBRC 100397 / JF-1)).